We begin with the raw amino-acid sequence, 258 residues long: Short-chain dehydrogenase chyC (258 aa).

Positions 37, 55, 81, 154, 158, 185, and 187 each coordinate NADP(+). Tyr-154 (proton donor) is an active-site residue. Lys-158 serves as the catalytic Lowers pKa of active site Tyr.

This sequence belongs to the short-chain dehydrogenases/reductases (SDR) family.

Functionally, short-chain dehydrogenase; part of the gene cluster that mediates the biosynthesis of the yellow pigment chrysogine. the NRPS chyA mediates the condensation of anthranilic acid and alanine into the intermediate 2-(2-aminopropanamido)benzoic acid. The remainder of the pathway is highly branched yielding at least 13 chrysogine-related compounds. The malonyl transferase chyE converts 2-(2-aminopropanamido)benzoic acid and 2-(2-aminopropanamido)benzamidine into 2-(2-(2-carboxyacetamido)propanamido)benzoic acid and 3-((1-((2-carbamoylphenyl)amino)-1-oxopropan-2-yl)amino)-3-oxopropanoic acid, respectively. ChyD is an amidase, being responsible for the amidation of the carboxylic acid moiety of 2-(2-aminopropanamido)benzoic acid, 2-(2-(2-carboxyacetamido)propanamido)benzoic acid and 2-(2-((4-amino-1-carboxy-4-oxobutyl)amino)propanamido)benzoic acid. ChyC is involved in the same reactions as ChyD, but plays a more minor role in the amidation reactions compared to chyD. The oxidoreductases chyH and chyM are involved in oxidation reactions that form N-pyruvoylanthranilamide from 2-(2-aminopropanamido)benzamidine and (1-((2-carbamoylphenyl)amino)-1-oxopropan-2-yl)glutamine, respectively. N-pyruvoylanthranilamide is further converted via two further branches in the pathway, yielding chrysogine and additional chrysogine-related coumpounds. Chrysogine is likely formed by a spontaneous ring closure from N-pyruvoylanthranilamide. The sequence is that of Short-chain dehydrogenase chyC from Penicillium rubens (strain ATCC 28089 / DSM 1075 / NRRL 1951 / Wisconsin 54-1255) (Penicillium chrysogenum).